The sequence spans 324 residues: tRNA dimethylallyltransferase (324 aa).

Gly-17–Thr-24 is a binding site for ATP. Thr-19–Thr-24 provides a ligand contact to substrate. Interaction with substrate tRNA stretches follow at residues Asp-42–Leu-45, Gln-166–Arg-170, Arg-251–Arg-256, and Lys-284–Arg-291.

It belongs to the IPP transferase family. In terms of assembly, monomer. Requires Mg(2+) as cofactor.

It carries out the reaction adenosine(37) in tRNA + dimethylallyl diphosphate = N(6)-dimethylallyladenosine(37) in tRNA + diphosphate. Functionally, catalyzes the transfer of a dimethylallyl group onto the adenine at position 37 in tRNAs that read codons beginning with uridine, leading to the formation of N6-(dimethylallyl)adenosine (i(6)A). This Burkholderia ambifaria (strain MC40-6) protein is tRNA dimethylallyltransferase.